The primary structure comprises 54 residues: Large ribosomal subunit protein bL33 (54 aa).

The protein belongs to the bacterial ribosomal protein bL33 family.

The sequence is that of Large ribosomal subunit protein bL33 from Caldicellulosiruptor saccharolyticus (strain ATCC 43494 / DSM 8903 / Tp8T 6331).